Here is a 508-residue protein sequence, read N- to C-terminus: Photosystem II CP47 reaction center protein (508 aa).

The next 6 helical transmembrane spans lie at Ser-21–Ser-36, Ile-101–Trp-115, Gly-140–Phe-156, Ile-203–Ser-218, Val-237–Val-252, and Ser-457–Arg-472.

The protein belongs to the PsbB/PsbC family. PsbB subfamily. As to quaternary structure, PSII is composed of 1 copy each of membrane proteins PsbA, PsbB, PsbC, PsbD, PsbE, PsbF, PsbH, PsbI, PsbJ, PsbK, PsbL, PsbM, PsbT, PsbX, PsbY, PsbZ, Psb30/Ycf12, at least 3 peripheral proteins of the oxygen-evolving complex and a large number of cofactors. It forms dimeric complexes. Requires Binds multiple chlorophylls. PSII binds additional chlorophylls, carotenoids and specific lipids. as cofactor.

Its subcellular location is the plastid. It is found in the chloroplast thylakoid membrane. Functionally, one of the components of the core complex of photosystem II (PSII). It binds chlorophyll and helps catalyze the primary light-induced photochemical processes of PSII. PSII is a light-driven water:plastoquinone oxidoreductase, using light energy to abstract electrons from H(2)O, generating O(2) and a proton gradient subsequently used for ATP formation. The polypeptide is Photosystem II CP47 reaction center protein (Acorus calamus var. americanus (American sweet flag)).